We begin with the raw amino-acid sequence, 341 residues long: Myb-related transcription factor, partner of profilin (341 aa).

The Myb-like domain maps to 8–80; it reads VTRLRKPRFS…EVQKRWNDFK (73 aa). Disordered stretches follow at residues 84–103, 180–210, and 309–341; these read KEKLARVPHSTQSGTAEEAM, LPHLTPSPDPSECPSPPPPGSGTPLLTPSGV, and AEPPRSPSPPPPNKRKRFGYLSQRKRRGRWKNL. Over residues 184-200 the composition is skewed to pro residues; that stretch reads TPSPDPSECPSPPPPGS. The span at 321 to 341 shows a compositional bias: basic residues; the sequence is NKRKRFGYLSQRKRRGRWKNL.

The protein resides in the nucleus. Transcriptional repressor; DNA-binding protein that specifically recognizes the core sequence 5'-YAAC[GT]G-3'. This Xenopus laevis (African clawed frog) protein is Myb-related transcription factor, partner of profilin (mypop).